We begin with the raw amino-acid sequence, 180 residues long: Large ribosomal subunit protein uL5 (180 aa).

It belongs to the universal ribosomal protein uL5 family. Part of the 50S ribosomal subunit; part of the 5S rRNA/L5/L18/L25 subcomplex. Contacts the 5S rRNA and the P site tRNA. Forms a bridge to the 30S subunit in the 70S ribosome.

Functionally, this is one of the proteins that bind and probably mediate the attachment of the 5S RNA into the large ribosomal subunit, where it forms part of the central protuberance. In the 70S ribosome it contacts protein S13 of the 30S subunit (bridge B1b), connecting the 2 subunits; this bridge is implicated in subunit movement. Contacts the P site tRNA; the 5S rRNA and some of its associated proteins might help stabilize positioning of ribosome-bound tRNAs. This is Large ribosomal subunit protein uL5 from Mycoplasma pneumoniae (strain ATCC 29342 / M129 / Subtype 1) (Mycoplasmoides pneumoniae).